The primary structure comprises 394 residues: Dual specificity protein phosphatase 4 (394 aa).

An N-acetylvaline modification is found at V2. Residues 41 to 159 (SGGKCLLLDC…FSSEYPEFCS (119 aa)) enclose the Rhodanese domain. The Tyrosine-protein phosphatase domain occupies 195-336 (GPVEILPFLY…LLQFESQVLA (142 aa)). C280 serves as the catalytic Phosphocysteine intermediate. S386 and S391 each carry phosphoserine; by MAPK.

The protein belongs to the protein-tyrosine phosphatase family. Non-receptor class dual specificity subfamily. In terms of assembly, hollow spherical complex composed of 24 subunits with pseudooctahedral symmetry, has a tetramer as the basic unit. Phosphorylation in the C-terminus by ERK1/2 inhibits proteasomal degradation and stabilizes the protein.

The protein localises to the nucleus. The catalysed reaction is O-phospho-L-tyrosyl-[protein] + H2O = L-tyrosyl-[protein] + phosphate. The enzyme catalyses O-phospho-L-seryl-[protein] + H2O = L-seryl-[protein] + phosphate. It carries out the reaction O-phospho-L-threonyl-[protein] + H2O = L-threonyl-[protein] + phosphate. Functionally, regulates mitogenic signal transduction by dephosphorylating both Thr and Tyr residues on MAP kinases ERK1 and ERK2. The polypeptide is Dual specificity protein phosphatase 4 (DUSP4) (Homo sapiens (Human)).